The sequence spans 140 residues: 3-hydroxyacyl-[acyl-carrier-protein] dehydratase FabZ (140 aa).

His47 is an active-site residue.

Belongs to the thioester dehydratase family. FabZ subfamily.

Its subcellular location is the cytoplasm. It carries out the reaction a (3R)-hydroxyacyl-[ACP] = a (2E)-enoyl-[ACP] + H2O. Functionally, involved in unsaturated fatty acids biosynthesis. Catalyzes the dehydration of short chain beta-hydroxyacyl-ACPs and long chain saturated and unsaturated beta-hydroxyacyl-ACPs. This is 3-hydroxyacyl-[acyl-carrier-protein] dehydratase FabZ from Streptococcus pneumoniae (strain CGSP14).